A 1067-amino-acid chain; its full sequence is Kinesin-like protein KIF11-A (1067 aa).

The 342-residue stretch at 18–359 (NIQVVVRCRP…LDYASRAKNI (342 aa)) folds into the Kinesin motor domain. 105–112 (GQTGTGKT) is an ATP binding site. 3 coiled-coil regions span residues 365-480 (VNQK…QEAF), 692-721 (DSSS…HSEG), and 882-915 (QAQE…QVQS). Residue Thr-937 is modified to Phosphothreonine; by CDK1. The residue at position 1046 (Ser-1046) is a Phosphoserine; by NEK6.

The protein belongs to the TRAFAC class myosin-kinesin ATPase superfamily. Kinesin family. BimC subfamily. In terms of assembly, heterotetramer of two heavy and two light chains. Interacts with aurka. In terms of processing, phosphorylation of Thr-937 during mitosis controls the association of this protein with the spindle apparatus. Post-translationally, a subset of this protein primarily localized at the spindle pole is phosphorylated by NEK6 during mitosis. Phosphorylated on a serine residue by aurka. In terms of tissue distribution, highly expressed in unfertilized eggs, especially in the germinal vesicle and in the radial yolk-poor channels. Also present in testis.

It is found in the cytoplasm. The protein resides in the cytoskeleton. It localises to the spindle pole. In terms of biological role, plus end-directed motor protein required for establishing a bipolar spindle. Associates with both interphase and spindle microtubules. May be involved in nuclear divisions taking place during the development of unfertilized eggs. Required in non-mitotic cells for transport of secretory proteins from the Golgi complex to the cell surface. The protein is Kinesin-like protein KIF11-A (kif11-a) of Xenopus laevis (African clawed frog).